The chain runs to 337 residues: MADRYILAVESSCDETSVAVLKNEKDLLSNIIASQVESHKRFGGVVPEVASRHHVEVVTLCIKDALSEAGIVAEQLDAVAVTYGPGLVGALLVGMAAAKAFAWAHGLPLIPVNHMAGHLMAAREVQELEYPLLALLVSGGHTELVYVSEPGNYKIVGETRDDAVGEAYDKVGRVMGLTYPAGREIDELAHKGKDVYDFPRAMIKEDHLEFSFSGLKSAFINLHHNAEQKGEVLVTEDLCASFQAAVLDILLAKTKKALERYPVKTLVVAGGVAANQGLRERLAEEITDVDVVIPPLRLCGDNAGMIALAAAIECDKKHFADLDLNAKPSLAFAGFEE.

Fe cation-binding residues include His114 and His118. Substrate contacts are provided by residues 136 to 140 (LVSGG), Asp169, Gly182, Asp186, and Asn275. Asp301 contributes to the Fe cation binding site.

This sequence belongs to the KAE1 / TsaD family. It depends on Fe(2+) as a cofactor.

The protein localises to the cytoplasm. It catalyses the reaction L-threonylcarbamoyladenylate + adenosine(37) in tRNA = N(6)-L-threonylcarbamoyladenosine(37) in tRNA + AMP + H(+). Required for the formation of a threonylcarbamoyl group on adenosine at position 37 (t(6)A37) in tRNAs that read codons beginning with adenine. Is involved in the transfer of the threonylcarbamoyl moiety of threonylcarbamoyl-AMP (TC-AMP) to the N6 group of A37, together with TsaE and TsaB. TsaD likely plays a direct catalytic role in this reaction. This is tRNA N6-adenosine threonylcarbamoyltransferase from Streptococcus thermophilus (strain ATCC BAA-491 / LMD-9).